The following is a 362-amino-acid chain: Aminomethyltransferase (362 aa).

Belongs to the GcvT family. The glycine cleavage system is composed of four proteins: P, T, L and H.

It carries out the reaction N(6)-[(R)-S(8)-aminomethyldihydrolipoyl]-L-lysyl-[protein] + (6S)-5,6,7,8-tetrahydrofolate = N(6)-[(R)-dihydrolipoyl]-L-lysyl-[protein] + (6R)-5,10-methylene-5,6,7,8-tetrahydrofolate + NH4(+). Its function is as follows. The glycine cleavage system catalyzes the degradation of glycine. In Colwellia psychrerythraea (strain 34H / ATCC BAA-681) (Vibrio psychroerythus), this protein is Aminomethyltransferase.